A 37-amino-acid polypeptide reads, in one-letter code: Large ribosomal subunit protein bL36 (37 aa).

The protein belongs to the bacterial ribosomal protein bL36 family.

The polypeptide is Large ribosomal subunit protein bL36 (Aliarcobacter butzleri (strain RM4018) (Arcobacter butzleri)).